Reading from the N-terminus, the 618-residue chain is MVSPRMSGLLSQTVILALIFLPQTRPAGVFELQIHSFGPGPGPGAPRSPCSARLPCRLFFRVCLKPGLSEEAAESPCALGAALSARGPVYTEQPGAPAPDLPLPDGLLQVPFRDAWPGTFSFIIETWREELGDQIGGPAWSLLARVAGRRRLAAGGPWARDIQRAGAWELRFSYRARCEPPAVGTACTRLCRPRSAPSRCGPGLRPCAPLEDECEAPLVCRAGCSPEHGFCEQPGECRCLEGWTGPLCTVPVSTSSCLSPRGPSSATTGCLVPGPGPCDGNPCANGGSCSETPRSFECTCPRGFYGLRCEVSGVTCADGPCFNGGLCVGGADPDSAYICHCPPGFQGSNCEKRVDRCSLQPCRNGGLCLDLGHALRCRCRAGFAGPRCEHDLDDCAGRACANGGTCVEGGGAHRCSCALGFGGRDCRERADPCAARPCAHGGRCYAHFSGLVCACAPGYMGARCEFPVHPDGASALPAAPPGLRPGDPQRYLLPPALGLLVAAGVAGAALLLVHVRRRGHSQDAGSRLLAGTPEPSVHALPDALNNLRTQEGSGDGPSSSVDWNRPEDVDPQGIYVISAPSIYAREVATPLFPPLHTGRAGQRQHLLFPYPSSILSVK.

The first 26 residues, 1 to 26, serve as a signal peptide directing secretion; that stretch reads MVSPRMSGLLSQTVILALIFLPQTRP. Over 27–492 the chain is Extracellular; that stretch reads AGVFELQIHS…LRPGDPQRYL (466 aa). One can recognise a DSL domain in the interval 176–215; the sequence is ARCEPPAVGTACTRLCRPRSAPSRCGPGLRPCAPLEDECE. EGF-like domains are found at residues 216 to 249, 274 to 310, 312 to 351, 353 to 389, 391 to 427, and 429 to 465; these read APLV…PLCT, GPGP…LRCE, SGVT…SNCE, RVDR…PRCE, DLDD…RDCR, and RADP…ARCE. Intrachain disulfides connect Cys220–Cys231, Cys224–Cys237, Cys239–Cys248, Cys278–Cys289, Cys283–Cys298, Cys300–Cys309, Cys316–Cys327, Cys321–Cys339, Cys341–Cys350, Cys357–Cys368, Cys362–Cys377, Cys379–Cys388, Cys395–Cys406, Cys400–Cys415, Cys417–Cys426, Cys433–Cys444, Cys438–Cys453, and Cys455–Cys464. Residues 493 to 513 traverse the membrane as a helical segment; the sequence is LPPALGLLVAAGVAGAALLLV. The Cytoplasmic segment spans residues 514–618; it reads HVRRRGHSQD…PYPSSILSVK (105 aa). The span at 546–562 shows a compositional bias: polar residues; that stretch reads NLRTQEGSGDGPSSSVD. Residues 546–566 are disordered; sequence NLRTQEGSGDGPSSSVDWNRP.

In terms of assembly, can bind and activate Notch-1 or another Notch receptor. Ubiquitinated by MIB (MIB1 or MIB2), leading to its endocytosis and subsequent degradation.

It is found in the membrane. Functionally, inhibits primary neurogenesis. May be required to divert neurons along a specific differentiation pathway. Plays a role in the formation of somite boundaries during segmentation of the paraxial mesoderm. In Homo sapiens (Human), this protein is Delta-like protein 3 (DLL3).